Consider the following 405-residue polypeptide: Putative polysaccharide ligase RT0347 (405 aa).

The next 10 membrane-spanning stretches (helical) occupy residues 23-43 (IAAT…ISFI), 77-97 (LFIA…NSLV), 120-140 (ILYL…LFFI), 156-178 (FGLY…VIII), 201-221 (ISDS…FILA), 227-247 (IFFK…PIIA), 270-290 (LFIW…GYGF), 322-342 (ILQI…CLVY), 353-375 (ISNF…MISY), and 377-397 (IWQT…KLLV).

Belongs to the O-antigen ligase family.

It is found in the membrane. In Rickettsia typhi (strain ATCC VR-144 / Wilmington), this protein is Putative polysaccharide ligase RT0347.